A 138-amino-acid polypeptide reads, in one-letter code: Endoribonuclease YbeY (138 aa).

Residues His105, His109, and Asp115 each contribute to the Zn(2+) site.

This sequence belongs to the endoribonuclease YbeY family. The cofactor is Zn(2+).

Its subcellular location is the cytoplasm. Single strand-specific metallo-endoribonuclease involved in late-stage 70S ribosome quality control and in maturation of the 3' terminus of the 16S rRNA. The polypeptide is Endoribonuclease YbeY (Chlorobium phaeobacteroides (strain BS1)).